The sequence spans 315 residues: Melanoma-associated antigen 9 (315 aa).

Residues 1–13 (MSLEQRSPHCKPD) are compositionally biased toward basic and acidic residues. The disordered stretch occupies residues 1 to 67 (MSLEQRSPHC…PQSPQGGASS (67 aa)). A compositionally biased stretch (low complexity) spans 50–67 (SAAGSSSPPQSPQGGASS). Positions 108–307 (LKLKVAELVH…ICYPSLYEEV (200 aa)) constitute an MAGE domain.

In terms of tissue distribution, expressed in many tumors of several types, such as melanoma, head and neck squamous cell carcinoma, lung carcinoma and breast carcinoma, but not in normal tissues except for testes and placenta.

Its function is as follows. Not known, though may play a role in embryonal development and tumor transformation or aspects of tumor progression. The chain is Melanoma-associated antigen 9 (MAGEA9) from Homo sapiens (Human).